Reading from the N-terminus, the 488-residue chain is N-succinylglutamate 5-semialdehyde dehydrogenase (488 aa).

221–226 (GSSRTG) is a binding site for NAD(+). Active-site residues include Glu-244 and Cys-278.

This sequence belongs to the aldehyde dehydrogenase family. AstD subfamily.

The enzyme catalyses N-succinyl-L-glutamate 5-semialdehyde + NAD(+) + H2O = N-succinyl-L-glutamate + NADH + 2 H(+). Its pathway is amino-acid degradation; L-arginine degradation via AST pathway; L-glutamate and succinate from L-arginine: step 4/5. Functionally, catalyzes the NAD-dependent reduction of succinylglutamate semialdehyde into succinylglutamate. The protein is N-succinylglutamate 5-semialdehyde dehydrogenase of Pseudomonas fluorescens (strain Pf0-1).